We begin with the raw amino-acid sequence, 382 residues long: Chaperone protein DnaJ (382 aa).

One can recognise a J domain in the interval 5–70 (DFYEILGVPK…QKRAAYDQYG (66 aa)). Residues 137-215 (GVTKEIRIPT…CHGHGRVEKT (79 aa)) form a CR-type zinc finger. Positions 150, 153, 167, 170, 189, 192, 203, and 206 each coordinate Zn(2+). CXXCXGXG motif repeat units lie at residues 150-157 (CDICHGSG), 167-174 (CPTCHGSG), 189-196 (CPHCHGRG), and 203-210 (CNKCHGHG).

This sequence belongs to the DnaJ family. In terms of assembly, homodimer. Zn(2+) is required as a cofactor.

Its subcellular location is the cytoplasm. In terms of biological role, participates actively in the response to hyperosmotic and heat shock by preventing the aggregation of stress-denatured proteins and by disaggregating proteins, also in an autonomous, DnaK-independent fashion. Unfolded proteins bind initially to DnaJ; upon interaction with the DnaJ-bound protein, DnaK hydrolyzes its bound ATP, resulting in the formation of a stable complex. GrpE releases ADP from DnaK; ATP binding to DnaK triggers the release of the substrate protein, thus completing the reaction cycle. Several rounds of ATP-dependent interactions between DnaJ, DnaK and GrpE are required for fully efficient folding. Also involved, together with DnaK and GrpE, in the DNA replication of plasmids through activation of initiation proteins. The sequence is that of Chaperone protein DnaJ from Enterobacter sp. (strain 638).